The primary structure comprises 513 residues: Glutamate--tRNA ligase 2 (513 aa).

A 'HIGH' region motif is present at residues 11-21; sequence PSPTGFLHIGS. The short motif at 240–244 is the 'KMSKS' region element; it reads KLSKR. K243 serves as a coordination point for ATP.

Belongs to the class-I aminoacyl-tRNA synthetase family. Glutamate--tRNA ligase type 1 subfamily. As to quaternary structure, monomer.

The protein resides in the cytoplasm. It catalyses the reaction tRNA(Glu) + L-glutamate + ATP = L-glutamyl-tRNA(Glu) + AMP + diphosphate. Catalyzes the attachment of glutamate to tRNA(Glu) in a two-step reaction: glutamate is first activated by ATP to form Glu-AMP and then transferred to the acceptor end of tRNA(Glu). The chain is Glutamate--tRNA ligase 2 from Rickettsia rickettsii (strain Iowa).